We begin with the raw amino-acid sequence, 356 residues long: Pavine N-methyltransferase (356 aa).

Positions 96, 97, 135, 159, 163, 185, 186, and 201 each coordinate S-adenosyl-L-homocysteine. The S-adenosyl-L-methionine site is built by Phe96, Ser97, Gly135, Asn159, Gln163, Asp185, Val186, and Val201. Glu205 is a binding site for (S)-tetrahydropapaverine. Cys331 is an active-site residue.

Belongs to the CFA/CMAS family. In terms of assembly, homodimer.

The protein localises to the cytoplasm. It carries out the reaction (+-)-pavine + S-adenosyl-L-methionine = N-methylpavine + S-adenosyl-L-homocysteine + H(+). The enzyme catalyses (S)-reticuline + S-adenosyl-L-methionine = (S)-tembetarine + S-adenosyl-L-homocysteine + H(+). It catalyses the reaction (S)-stylopine + S-adenosyl-L-methionine = (S)-cis-N-methylstylopine + S-adenosyl-L-homocysteine. The catalysed reaction is (S)-scoulerine + S-adenosyl-L-methionine = (S)-cis-N-methylscoulerine + S-adenosyl-L-homocysteine. It carries out the reaction (S)-tetrahydropapaverine + S-adenosyl-L-methionine = (S)-N-methyltetrahydropapaverine + S-adenosyl-L-homocysteine + H(+). The enzyme catalyses (S)-tetrahydropalmatine + S-adenosyl-L-methionine = (S)-cis-N-methyltetrahydropalmatine + S-adenosyl-L-homocysteine. It participates in alkaloid biosynthesis. Its activity is regulated as follows. In the presence of a racemic mixture of tetrahydropapaverine (THP), one molecule of (S)-THP binds in a productive mode, while one molecule of (R)-THP is bound next to it in a non-productive mode. The (R)-THP seems to inhibit the release of products from the enzyme when higher concentrations of the racemic substrate are added to the reaction. Its function is as follows. N-methyltransferase with a substrate preference for (+-)-pavine and (S)-reticuline, but also active with the protoberberines scoulerine and stylopine and, to a lesser extent, tetrahydropapaverine (THP) and tetrahydropalmatine. Is not active on (R)-reticuline, cryptopine, glaucine, codeine, canadaline, noscapine and berbamine. The protein is Pavine N-methyltransferase of Thalictrum flavum subsp. glaucum (Yellow meadow rue).